We begin with the raw amino-acid sequence, 227 residues long: Probable septum site-determining protein MinC (227 aa).

This sequence belongs to the MinC family. In terms of assembly, interacts with MinD and FtsZ.

Its function is as follows. Cell division inhibitor that blocks the formation of polar Z ring septums. Rapidly oscillates between the poles of the cell to destabilize FtsZ filaments that have formed before they mature into polar Z rings. Prevents FtsZ polymerization. This Bacillus pumilus (strain SAFR-032) protein is Probable septum site-determining protein MinC.